The sequence spans 896 residues: Alanine--tRNA ligase (896 aa).

Histidine 580, histidine 584, cysteine 683, and histidine 687 together coordinate Zn(2+).

Belongs to the class-II aminoacyl-tRNA synthetase family. Zn(2+) is required as a cofactor.

Its subcellular location is the cytoplasm. The catalysed reaction is tRNA(Ala) + L-alanine + ATP = L-alanyl-tRNA(Ala) + AMP + diphosphate. Functionally, catalyzes the attachment of alanine to tRNA(Ala) in a two-step reaction: alanine is first activated by ATP to form Ala-AMP and then transferred to the acceptor end of tRNA(Ala). Also edits incorrectly charged Ser-tRNA(Ala) and Gly-tRNA(Ala) via its editing domain. The protein is Alanine--tRNA ligase of Mycolicibacterium smegmatis (strain ATCC 700084 / mc(2)155) (Mycobacterium smegmatis).